Reading from the N-terminus, the 117-residue chain is Large ribosomal subunit protein bL19 (117 aa).

The protein belongs to the bacterial ribosomal protein bL19 family.

In terms of biological role, this protein is located at the 30S-50S ribosomal subunit interface and may play a role in the structure and function of the aminoacyl-tRNA binding site. This Paenarthrobacter aurescens (strain TC1) protein is Large ribosomal subunit protein bL19.